The following is a 355-amino-acid chain: Small ribosomal subunit protein uS2 (355 aa).

Belongs to the universal ribosomal protein uS2 family.

The protein is Small ribosomal subunit protein uS2 of Methylorubrum extorquens (strain CM4 / NCIMB 13688) (Methylobacterium extorquens).